The following is a 188-amino-acid chain: RWD domain-containing protein 4 (188 aa).

Ser2 bears the N-acetylserine mark. One can recognise an RWD domain in the interval 9–111; it reads MELEALRSIY…EYAKDNKEQF (103 aa). The tract at residues 132–167 is disordered; the sequence is TPNTAPSSKKKDKKEQLSKAQKRKLADKTDHKGELP. Over residues 155–166 the composition is skewed to basic and acidic residues; sequence KLADKTDHKGEL.

The polypeptide is RWD domain-containing protein 4 (RWDD4) (Homo sapiens (Human)).